The following is a 245-amino-acid chain: Orotidine 5'-phosphate decarboxylase (245 aa).

Substrate contacts are provided by residues D22, K44, 71 to 80, T131, R192, Q201, G221, and R222; that span reads DLKFHDIPNT. K73 functions as the Proton donor in the catalytic mechanism.

Belongs to the OMP decarboxylase family. Type 1 subfamily. As to quaternary structure, homodimer.

It carries out the reaction orotidine 5'-phosphate + H(+) = UMP + CO2. It participates in pyrimidine metabolism; UMP biosynthesis via de novo pathway; UMP from orotate: step 2/2. Catalyzes the decarboxylation of orotidine 5'-monophosphate (OMP) to uridine 5'-monophosphate (UMP). The protein is Orotidine 5'-phosphate decarboxylase of Yersinia pseudotuberculosis serotype O:1b (strain IP 31758).